We begin with the raw amino-acid sequence, 523 residues long: Ubiquitin carboxyl-terminal hydrolase 22-B (523 aa).

The UBP-type zinc-finger motif lies at 4–121 (AGCSHVNSFK…KEEQRKAWKL (118 aa)). Positions 6, 8, 46, 49, 59, 62, 67, 72, 76, 82, 95, and 98 each coordinate Zn(2+). The region spanning 174 to 518 (RGLINLGNTC…EGYLLFYHKQ (345 aa)) is the USP domain. The Nucleophile role is filled by Cys-183. His-477 functions as the Proton acceptor in the catalytic mechanism.

It belongs to the peptidase C19 family. UBP8 subfamily. In terms of assembly, component of some SAGA transcription coactivator-HAT complexes.

The protein localises to the nucleus. It carries out the reaction Thiol-dependent hydrolysis of ester, thioester, amide, peptide and isopeptide bonds formed by the C-terminal Gly of ubiquitin (a 76-residue protein attached to proteins as an intracellular targeting signal).. Its function is as follows. Histone deubiquitinating component of the transcription regulatory histone acetylation (HAT) complex SAGA. Catalyzes the deubiquitination of both histones H2A and H2B, thereby acting as a coactivator. Recruited to specific gene promoters by activators, where it is required for transcription. In Xenopus laevis (African clawed frog), this protein is Ubiquitin carboxyl-terminal hydrolase 22-B (usp22-b).